The primary structure comprises 252 residues: MIKIVLNGCCGKMGKVITECASKFNDLQIVAGIDKFPYETSYPIFETPEDLNLDYDVLLDFSRAGALKGLLNLTEKTKKPLVICSTGFSDEDLALIEEKSKTLPLFRSANMSLGINLINSLLRKVTPLLYGNYDIEIIEKHHNQKVDSPSGTAVLLADTIKESINDETKFVYGRSGASKREENEIGIHAIRGGSIVGDHDVIFAGVGEVIELSHKAISREVFAIGALKACEYMGNISIPGLYTMDDVIGITK.

NAD(+)-binding positions include 8–13 (GCCGKM), 84–86 (CST), and 108–111 (SANM). Catalysis depends on His-141, which acts as the Proton donor/acceptor. (S)-2,3,4,5-tetrahydrodipicolinate is bound at residue His-142. Lys-145 functions as the Proton donor in the catalytic mechanism. (S)-2,3,4,5-tetrahydrodipicolinate is bound at residue 151–152 (GT).

The protein belongs to the DapB family.

Its subcellular location is the cytoplasm. The catalysed reaction is (S)-2,3,4,5-tetrahydrodipicolinate + NAD(+) + H2O = (2S,4S)-4-hydroxy-2,3,4,5-tetrahydrodipicolinate + NADH + H(+). It carries out the reaction (S)-2,3,4,5-tetrahydrodipicolinate + NADP(+) + H2O = (2S,4S)-4-hydroxy-2,3,4,5-tetrahydrodipicolinate + NADPH + H(+). Its pathway is amino-acid biosynthesis; L-lysine biosynthesis via DAP pathway; (S)-tetrahydrodipicolinate from L-aspartate: step 4/4. Catalyzes the conversion of 4-hydroxy-tetrahydrodipicolinate (HTPA) to tetrahydrodipicolinate. The polypeptide is 4-hydroxy-tetrahydrodipicolinate reductase (Clostridium botulinum (strain Eklund 17B / Type B)).